A 91-amino-acid polypeptide reads, in one-letter code: uncharacterized protein (91 aa).

This is an uncharacterized protein from Vaccinia virus (strain Copenhagen) (VACV).